Consider the following 1073-residue polypeptide: Ring-infected erythrocyte surface antigen (1073 aa).

A signal peptide spans 1–65 (MRPFHAYSWI…IIGILYIILN (65 aa)). Residue N71 is glycosylated (N-linked (GlcNAc...) asparagine). The span at 428-444 (DTSEEESVEENEEEHTV) shows a compositional bias: acidic residues. Residues 428–514 (DTSEEESVEE…SDVQQTSEAA (87 aa)) are disordered. Positions 436-504 (EENEEEHTVD…VAEEHVEEPA (69 aa)) are tandem repeats 1. Residues 445–456 (DDEHVEEHTADD) are compositionally biased toward basic and acidic residues. Residues 457 to 470 (EHVEEPTVADDEHV) show a composition bias toward acidic residues. Basic and acidic residues predominate over residues 476–502 (ADEHVEEPTVAEEHVEEPTVAEEHVEE). A J domain is found at 521–589 (DTLYYDILGV…KRWYNKYGYD (69 aa)). N639, N773, and N777 each carry an N-linked (GlcNAc...) asparagine glycan. The interval 891–1073 (NAEENVEHDA…VEEHNEEYDE (183 aa)) is tandem repeats 2. Residues 894–930 (ENVEHDAEENVEHDAEENVEHDAEENVEHDAEENVEH) are compositionally biased toward basic and acidic residues. The tract at residues 894 to 1073 (ENVEHDAEEN…VEEHNEEYDE (180 aa)) is disordered. The span at 931 to 1073 (DAEENVEENV…VEEHNEEYDE (143 aa)) shows a compositional bias: acidic residues.

The Tyr residues in the variant tetrameric sequences in the RESA repeat are possibly phosphorylated (by homology with band 3).

It localises to the cell membrane. Its function is as follows. May disrupt the normal intermolecular interactions of the cytoplasmic domain of band 3 and thereby facilitate the invagination of the red cell membrane which is necessary for the formation of the parasitophorous vacuole. The sequence is that of Ring-infected erythrocyte surface antigen (RESA) from Plasmodium falciparum (isolate FC27 / Papua New Guinea).